The following is a 75-amino-acid chain: Alpha-elapitoxin-Bc2a (75 aa).

Positions 1–2 (YT) are cleaved as a signal peptide. Disulfide bonds link C5–C24, C17–C45, C30–C34, C49–C60, and C61–C66.

This sequence belongs to the three-finger toxin family. Long-chain subfamily. Type II alpha-neurotoxin sub-subfamily. As to quaternary structure, monomer in solution, homodimer in crystal state. As to expression, expressed by the venom gland.

The protein localises to the secreted. In terms of biological role, binds to muscular and neuronal nicotinic acetylcholine receptor (nAChR) and inhibits acetylcholine from binding to the receptor, thereby impairing neuromuscular and neuronal transmission. Reversibly blocks chick and mouse muscle nicotinic acetylcholine receptors. Blocks muscle type nAChR with an IC(50)=30 nM, when heterologously expressed in oocytes. Also binds with high affinity to alpha-7/CHRNA7 nAChRs. In addition, shows a weak inhibition of neuronal alpha-3-beta-2/CHRNA3-CHRNB2 nAChR (IC(50)=2.9 uM). Selectively binds to alpha-1-delta subunit interface of the mouse muscle nicotinic acetylcholine receptor, with a 10-fold higher affinity for the adult than for the fetal receptors. In vivo, when intraperitoneally injected into mice, causes flaccid paralysis and respiratory distress, followed by death within 2-4 hours. The sequence is that of Alpha-elapitoxin-Bc2a from Bungarus candidus (Malayan krait).